We begin with the raw amino-acid sequence, 464 residues long: mRNA capping enzyme LEF-4 (464 aa).

The mRNA triphosphatase stretch occupies residues 1 to 204; it reads MDYGDFVIEK…NVMCNIIADM (204 aa). The mRNA guanylyltransferase stretch occupies residues 205 to 464; the sequence is EALTDAQNIS…KHRRDRIVPN (260 aa). Catalysis depends on K255, which acts as the N6-GMP-lysine intermediate.

The protein belongs to the baculoviridae LEF-4 family. As to quaternary structure, interacts with LEF-8, LEF-9, and p47.

The protein localises to the host cytoplasm. The protein resides in the host nucleus. It carries out the reaction a 5'-end diphospho-ribonucleoside in mRNA + GTP + H(+) = a 5'-end (5'-triphosphoguanosine)-ribonucleoside in mRNA + diphosphate. It catalyses the reaction a 5'-end triphospho-ribonucleoside in mRNA + H2O = a 5'-end diphospho-ribonucleoside in mRNA + phosphate + H(+). Its function is as follows. Component of the viral DNA-dependent RNA polymerase that catalyzes two reactions involved in viral RNA cap formation: an RNA 5'-triphosphatase that hydrolyzes the gamma phosphate of triphosphate-terminated RNA and a guanylyltransferase that reacts with GTP to form a covalent protein-guanylate adduct. Therefore plays an essential role in late and very late gene expression. This chain is mRNA capping enzyme LEF-4 (LEF-4), found in Autographa californica nuclear polyhedrosis virus (AcMNPV).